A 916-amino-acid polypeptide reads, in one-letter code: Translation initiation factor IF-2 (916 aa).

The disordered stretch occupies residues 1-325 (MTDSNDDKTL…QEKFRRSQVQ (325 aa)). Low complexity predominate over residues 60–91 (ITPATPAAPVRAAEPAPAPAQARPQQSTPAPR). The segment covering 97–108 (GQANQRPQQSYQ) has biased composition (polar residues). The span at 125–182 (SPEEMDARRRALAESQARDAQDAIRRAEEEKRRAAEEAVRKAAEAEEAARRAVEEAAR) shows a compositional bias: basic and acidic residues. Low complexity-rich tracts occupy residues 183–209 (QAEAAAAAAAEPAVTAPAPAPVTAEAR) and 229–243 (DGAAARPAPGAPAAV). The 168-residue stretch at 414–581 (SRPPVVTIMG…AVLLQAEILD (168 aa)) folds into the tr-type G domain. The G1 stretch occupies residues 423 to 430 (GHVDHGKT). Position 423-430 (423-430 (GHVDHGKT)) interacts with GTP. The segment at 448–452 (GITQH) is G2. The tract at residues 469-472 (DTPG) is G3. Residues 469 to 473 (DTPGH) and 523 to 526 (NKID) contribute to the GTP site. A G4 region spans residues 523-526 (NKID). Residues 559–561 (SAK) form a G5 region.

Belongs to the TRAFAC class translation factor GTPase superfamily. Classic translation factor GTPase family. IF-2 subfamily.

The protein localises to the cytoplasm. In terms of biological role, one of the essential components for the initiation of protein synthesis. Protects formylmethionyl-tRNA from spontaneous hydrolysis and promotes its binding to the 30S ribosomal subunits. Also involved in the hydrolysis of GTP during the formation of the 70S ribosomal complex. This Rhizobium etli (strain ATCC 51251 / DSM 11541 / JCM 21823 / NBRC 15573 / CFN 42) protein is Translation initiation factor IF-2.